Consider the following 102-residue polypeptide: PqqA binding protein (102 aa).

This sequence belongs to the PqqD family. In terms of assembly, monomer. Interacts with PqqE.

It functions in the pathway cofactor biosynthesis; pyrroloquinoline quinone biosynthesis. Functions as a PqqA binding protein and presents PqqA to PqqE, in the pyrroloquinoline quinone (PQQ) biosynthetic pathway. The sequence is that of PqqA binding protein from Rhodopseudomonas palustris (strain HaA2).